The following is a 627-amino-acid chain: 2-oxoacid:ferredoxin oxidoreductase 1, subunit alpha (627 aa).

The YPITP motif motif lies at 253 to 257 (YPITP). Positions 256 and 344 each coordinate substrate.

Heterodimer composed of an alpha and a beta subunit.

The enzyme catalyses a 2-oxocarboxylate + 2 oxidized [2Fe-2S]-[ferredoxin] + CoA = an acyl-CoA + 2 reduced [2Fe-2S]-[ferredoxin] + CO2 + H(+). With respect to regulation, inhibited by low concentration of 4-fluoro-7-nitrobenzofurazan (NBD-F). In terms of biological role, catalyzes the coenzyme A-dependent oxidative decarboxylation of different 2-oxoacids such as 2-oxoglutarate, pyruvate and 2-oxobutyrate to form their CoA derivatives. The protein is 2-oxoacid:ferredoxin oxidoreductase 1, subunit alpha of Sulfurisphaera tokodaii (strain DSM 16993 / JCM 10545 / NBRC 100140 / 7) (Sulfolobus tokodaii).